A 134-amino-acid chain; its full sequence is Cytochrome b (134 aa).

A run of 3 helical transmembrane segments spans residues 33–53 (FGSLLGVCLATQILTGLFLAM), 77–98 (WILRYLHANGASMFFICLFLHV), and 113–133 (WNIGIILLFAVMATAFMGYVL). 2 residues coordinate heme b: H83 and H97.

Belongs to the cytochrome b family. The cytochrome bc1 complex contains 11 subunits: 3 respiratory subunits (MT-CYB, CYC1 and UQCRFS1), 2 core proteins (UQCRC1 and UQCRC2) and 6 low-molecular weight proteins (UQCRH/QCR6, UQCRB/QCR7, UQCRQ/QCR8, UQCR10/QCR9, UQCR11/QCR10 and a cleavage product of UQCRFS1). This cytochrome bc1 complex then forms a dimer. It depends on heme b as a cofactor.

It localises to the mitochondrion inner membrane. Its function is as follows. Component of the ubiquinol-cytochrome c reductase complex (complex III or cytochrome b-c1 complex) that is part of the mitochondrial respiratory chain. The b-c1 complex mediates electron transfer from ubiquinol to cytochrome c. Contributes to the generation of a proton gradient across the mitochondrial membrane that is then used for ATP synthesis. The protein is Cytochrome b (MT-CYB) of Rhinolophus hipposideros (Lesser horseshoe bat).